The chain runs to 68 residues: Large ribosomal subunit protein bL35 (68 aa).

It belongs to the bacterial ribosomal protein bL35 family.

The protein is Large ribosomal subunit protein bL35 of Orientia tsutsugamushi (strain Ikeda) (Rickettsia tsutsugamushi).